Here is a 281-residue protein sequence, read N- to C-terminus: Translation initiation factor IF3-4, chloroplastic (281 aa).

A chloroplast-targeting transit peptide spans 1–51 (MAGITSTVGFNAILAGATKTVSHPVKSKLFGLRLCVPEFSIVSLSPYHHRR). Disordered regions lie at residues 63 to 86 (GGGG…DDSL) and 253 to 281 (KVQE…TQDI). 2 stretches are compositionally biased toward basic and acidic residues: residues 70-79 (PGDRRGRQKE) and 253-270 (KVQE…DDKV).

Belongs to the IF-3 family. As to quaternary structure, monomer.

The protein localises to the plastid. It is found in the chloroplast. Its function is as follows. Chloroplast translation initiation factor that is essential for the coordination of leaf and chloroplast development. IF-3 binds to the 30S ribosomal subunit and shifts the equilibrium between 70S ribosomes and their 50S and 30S subunits in favor of the free subunits, thus enhancing the availability of 30S subunits on which protein synthesis initiation begins. The protein is Translation initiation factor IF3-4, chloroplastic of Arabidopsis thaliana (Mouse-ear cress).